An 892-amino-acid polypeptide reads, in one-letter code: Leucine--tRNA ligase (892 aa).

The short motif at 42–52 is the 'HIGH' region element; that stretch reads PYPSGKLHMGH. A 'KMSKS' region motif is present at residues 640 to 644; that stretch reads TMSKS. Residue lysine 643 participates in ATP binding.

This sequence belongs to the class-I aminoacyl-tRNA synthetase family.

It is found in the cytoplasm. It carries out the reaction tRNA(Leu) + L-leucine + ATP = L-leucyl-tRNA(Leu) + AMP + diphosphate. The sequence is that of Leucine--tRNA ligase from Albidiferax ferrireducens (strain ATCC BAA-621 / DSM 15236 / T118) (Rhodoferax ferrireducens).